The following is a 430-amino-acid chain: Long-chain specific acyl-CoA dehydrogenase, mitochondrial (430 aa).

The transit peptide at 1–30 directs the protein to the mitochondrion; it reads MAARLLRGSLRVLGGHRAPRQLPAARCSHS. Lysine 42 is modified (N6-acetyllysine). Serine 54 is modified (phosphoserine). Lysine 66 and lysine 81 each carry N6-acetyllysine; alternate. 2 positions are modified to N6-succinyllysine; alternate: lysine 66 and lysine 81. Lysine 92 and lysine 95 each carry N6-acetyllysine. At lysine 165 the chain carries N6-succinyllysine. FAD-binding positions include 170-179 and 203-205; these read IAMTEPGAGS and FIS. Serine 179 lines the substrate pocket. 227–228 is a substrate binding site; sequence AH. Lysine 240 bears the N6-succinyllysine mark. Lysine 254 and lysine 279 each carry N6-acetyllysine; alternate. Residues lysine 254 and lysine 279 each carry the N6-succinyllysine; alternate modification. Substrate-binding positions include tyrosine 282 and 289–292; that span reads PQER. The active-site Proton acceptor is glutamate 291. Arginine 317 is an FAD binding site. Lysine 318 bears the N6-acetyllysine mark. An N6-acetyllysine; alternate modification is found at lysine 322. Lysine 322 carries the N6-succinyllysine; alternate modification. An FAD-binding site is contributed by glutamine 328. N6-acetyllysine is present on lysine 358. Serine 362 is subject to Phosphoserine. An FAD-binding site is contributed by 385 to 389; that stretch reads QLHGG. 412 to 413 contributes to the substrate binding site; sequence GG. 414 to 416 contacts FAD; it reads TNE.

This sequence belongs to the acyl-CoA dehydrogenase family. As to quaternary structure, homotetramer. Requires FAD as cofactor. Acetylation at Lys-318 and Lys-322 in proximity of the cofactor-binding sites strongly reduces catalytic activity. These sites are deacetylated by SIRT3.

It localises to the mitochondrion matrix. It catalyses the reaction a long-chain 2,3-saturated fatty acyl-CoA + oxidized [electron-transfer flavoprotein] + H(+) = a long-chain (2E)-enoyl-CoA + reduced [electron-transfer flavoprotein]. It carries out the reaction hexanoyl-CoA + oxidized [electron-transfer flavoprotein] + H(+) = (2E)-hexenoyl-CoA + reduced [electron-transfer flavoprotein]. The catalysed reaction is octanoyl-CoA + oxidized [electron-transfer flavoprotein] + H(+) = (2E)-octenoyl-CoA + reduced [electron-transfer flavoprotein]. The enzyme catalyses decanoyl-CoA + oxidized [electron-transfer flavoprotein] + H(+) = (2E)-decenoyl-CoA + reduced [electron-transfer flavoprotein]. It catalyses the reaction dodecanoyl-CoA + oxidized [electron-transfer flavoprotein] + H(+) = (2E)-dodecenoyl-CoA + reduced [electron-transfer flavoprotein]. It carries out the reaction tetradecanoyl-CoA + oxidized [electron-transfer flavoprotein] + H(+) = (2E)-tetradecenoyl-CoA + reduced [electron-transfer flavoprotein]. The catalysed reaction is oxidized [electron-transfer flavoprotein] + hexadecanoyl-CoA + H(+) = (2E)-hexadecenoyl-CoA + reduced [electron-transfer flavoprotein]. The enzyme catalyses octadecanoyl-CoA + oxidized [electron-transfer flavoprotein] + H(+) = (2E)-octadecenoyl-CoA + reduced [electron-transfer flavoprotein]. It catalyses the reaction eicosanoyl-CoA + oxidized [electron-transfer flavoprotein] + H(+) = (2E)-eicosenoyl-CoA + reduced [electron-transfer flavoprotein]. It carries out the reaction docosanoyl-CoA + oxidized [electron-transfer flavoprotein] + H(+) = (2E)-docosenoyl-CoA + reduced [electron-transfer flavoprotein]. The catalysed reaction is tetracosanoyl-CoA + oxidized [electron-transfer flavoprotein] + H(+) = (2E)-tetracosenoyl-CoA + reduced [electron-transfer flavoprotein]. The enzyme catalyses (5E)-tetradecenoyl-CoA + oxidized [electron-transfer flavoprotein] + H(+) = (2E,5E)-tetradecadienoyl-CoA + reduced [electron-transfer flavoprotein]. It catalyses the reaction (5Z)-tetradecenoyl-CoA + oxidized [electron-transfer flavoprotein] + H(+) = (2E,5Z)-tetradecadienoyl-CoA + reduced [electron-transfer flavoprotein]. It carries out the reaction oxidized [electron-transfer flavoprotein] + (9Z)-octadecenoyl-CoA + H(+) = (2E,9Z)-octadecadienoyl-CoA + reduced [electron-transfer flavoprotein]. Its pathway is lipid metabolism; mitochondrial fatty acid beta-oxidation. Functionally, long-chain specific acyl-CoA dehydrogenase is one of the acyl-CoA dehydrogenases that catalyze the first step of mitochondrial fatty acid beta-oxidation, an aerobic process breaking down fatty acids into acetyl-CoA and allowing the production of energy from fats. The first step of fatty acid beta-oxidation consists in the removal of one hydrogen from C-2 and C-3 of the straight-chain fatty acyl-CoA thioester, resulting in the formation of trans-2-enoyl-CoA. Among the different mitochondrial acyl-CoA dehydrogenases, long-chain specific acyl-CoA dehydrogenase can act on saturated and unsaturated acyl-CoAs with 6 to 24 carbons with a preference for 8 to 18 carbons long primary chains. The sequence is that of Long-chain specific acyl-CoA dehydrogenase, mitochondrial from Homo sapiens (Human).